The following is a 441-amino-acid chain: Protein dcd1A (441 aa).

The first 23 residues, 1 to 23 (MKIFNKLIFLIIQCILIISVTNA), serve as a signal peptide directing secretion. N-linked (GlcNAc...) asparagine glycans are attached at residues Asn45, Asn261, Asn308, and Asn419.

The protein localises to the secreted. The polypeptide is Protein dcd1A (dcd1A) (Dictyostelium discoideum (Social amoeba)).